Reading from the N-terminus, the 1076-residue chain is Vacuolar membrane protease (1076 aa).

The Cytoplasmic portion of the chain corresponds to 1–11 (MKCYNPSAFVP). A helical transmembrane segment spans residues 12–32 (MAVTLVTVVIYLGVFIPLLII). Topologically, residues 33–437 (HETVPSAPDD…TVFAVFRLRT (405 aa)) are vacuolar. 3 N-linked (GlcNAc...) asparagine glycosylation sites follow: N50, N99, and N156. Zn(2+) is bound by residues H220 and D232. E266 serves as the catalytic Proton acceptor. The Zn(2+) site is built by E267, E292, and H364. A helical transmembrane segment spans residues 438-458 (LFAWSLTLLIASPLILFAVSY). Residues 459-491 (LLNRQEKFYFFAGSIKSKNPEDEPISLGGWRGA) are Cytoplasmic-facing. The chain crosses the membrane as a helical span at residues 492 to 512 (FRFPITLFITSAITFACASLI). Residues 513 to 525 (NKINPMIIYSSPY) lie on the Vacuolar side of the membrane. Residues 526–546 (AVWSMSATLFFSVFWFIMAGC) form a helical membrane-spanning segment. The Cytoplasmic portion of the chain corresponds to 547 to 556 (NFVRPSALQR). A helical membrane pass occupies residues 557–577 (GYAFMWMFVFGWILLVVATVY). Over 578-584 (EDRFKIS) the chain is Vacuolar. Residues 585 to 605 (GGYLFVFYEAAIFLATLIAIC) traverse the membrane as a helical segment. Residues 606–738 (EQFALPRKST…LPIWTWLVQY (133 aa)) lie on the Cytoplasmic side of the membrane. 2 disordered regions span residues 619–662 (DSQN…EETV) and 701–720 (SYDG…HPYG). A compositionally biased stretch (basic and acidic residues) spans 621–632 (QNDHSDNQDHHH). Positions 647–660 (PNADDEAAEEDQEE) are enriched in acidic residues. The helical transmembrane segment at 739–759 (LLVGPFILVILGQVGLFLVAA) threads the bilayer. Topologically, residues 760 to 771 (LHQTGTDGSPLF) are vacuolar. The helical transmembrane segment at 772-792 (LPYLIVAIFSILLLLPVTPFI) threads the bilayer. The Cytoplasmic portion of the chain corresponds to 793–799 (HRLTHHM). Residues 800-820 (PTFFFLVFIGTLIYNLVAFPF) traverse the membrane as a helical segment. The Vacuolar portion of the chain corresponds to 821 to 1076 (SPNNRYKAYF…LGLAFLLAYV (256 aa)). N912 carries an N-linked (GlcNAc...) asparagine glycan.

This sequence belongs to the peptidase M28 family. Zn(2+) is required as a cofactor.

Its subcellular location is the vacuole membrane. May be involved in vacuolar sorting and osmoregulation. The sequence is that of Vacuolar membrane protease from Sclerotinia sclerotiorum (strain ATCC 18683 / 1980 / Ss-1) (White mold).